We begin with the raw amino-acid sequence, 246 residues long: Transcription factor A, mitochondrial (246 aa).

The N-terminal 42 residues, 1–42, are a transit peptide targeting the mitochondrion; it reads MALLRGVWGVLNALGKSGADLCAGCGSRLRYPFSFAYVPKWF. The HMG box 1 DNA-binding region spans 50-118; it reads PKKPMTSYVR…VYKEEINRIQ (69 aa). Phosphoserine; by PKA occurs at positions 56 and 61. T122 carries the phosphothreonine modification. The segment at residues 155–219 is a DNA-binding region (HMG box 2); it reads PKRPRSAYNI…RYYNEMKSWE (65 aa). S160 bears the Phosphoserine; by PKA mark. Residues S193 and S195 each carry the phosphoserine modification.

Monomer; binds DNA as a monomer. Homodimer. Component of the mitochondrial transcription initiation complex, composed at least of TFB2M, TFAM and POLRMT. In this complex TFAM recruits POLRMT to the promoter whereas TFB2M induces structural changes in POLRMT to enable promoter opening and trapping of the DNA non-template strand. Upon metabolic stress, forms a complex composed of FOXO3, SIRT3, TFAM and POLRMT. Interacts with TFB1M and TFB2M. Interacts with CLPX; this enhances DNA-binding. Phosphorylation by PKA within the HMG box 1 impairs DNA binding and promotes degradation by the AAA+ Lon protease.

The protein localises to the mitochondrion. Its subcellular location is the mitochondrion matrix. The protein resides in the mitochondrion nucleoid. Functionally, binds to the mitochondrial light strand promoter and functions in mitochondrial transcription regulation. Component of the mitochondrial transcription initiation complex, composed at least of TFB2M, TFAM and POLRMT that is required for basal transcription of mitochondrial DNA. In this complex, TFAM recruits POLRMT to a specific promoter whereas TFB2M induces structural changes in POLRMT to enable promoter opening and trapping of the DNA non-template strand. Required for accurate and efficient promoter recognition by the mitochondrial RNA polymerase. Promotes transcription initiation from the HSP1 and the light strand promoter by binding immediately upstream of transcriptional start sites. Is able to unwind DNA. Bends the mitochondrial light strand promoter DNA into a U-turn shape via its HMG boxes. Required for maintenance of normal levels of mitochondrial DNA. May play a role in organizing and compacting mitochondrial DNA. This Bos taurus (Bovine) protein is Transcription factor A, mitochondrial.